A 128-amino-acid chain; its full sequence is Small ribosomal subunit protein bS6 (128 aa).

It belongs to the bacterial ribosomal protein bS6 family.

Its function is as follows. Binds together with bS18 to 16S ribosomal RNA. The sequence is that of Small ribosomal subunit protein bS6 from Nitratiruptor sp. (strain SB155-2).